Here is a 269-residue protein sequence, read N- to C-terminus: Intercellular adhesion molecule 4 (269 aa).

A signal peptide spans 1 to 20; it reads SLFPLSLLFFLAAAYPGVGS. Residues 21–238 are Extracellular-facing; that stretch reads ALGRRTKRAQ…MLAWSSAPTA (218 aa). 2 consecutive Ig-like C2-type domains span residues 60–122 and 144–215; these read GKSV…TRWA and GRKY…LNLD. 4 N-linked (GlcNAc...) asparagine glycosylation sites follow: Asn66, Asn76, Asn188, and Asn221. Cystine bridges form between Cys67/Cys111, Cys67/Cys115, Cys71/Cys115, and Cys151/Cys208. Residues 239-259 traverse the membrane as a helical segment; the sequence is LASVSIAALVGILLTVGAAYL. The Cytoplasmic portion of the chain corresponds to 260–269; that stretch reads CKCLAMKSQA.

This sequence belongs to the immunoglobulin superfamily. ICAM family. N- and O-glycosylated.

It is found in the cell membrane. ICAM proteins are ligands for the leukocyte adhesion protein LFA-1 (integrin alpha-L/beta-2). ICAM4 is also a ligand for alpha-4/beta-1 and alpha-V integrins. The polypeptide is Intercellular adhesion molecule 4 (ICAM4) (Pan troglodytes (Chimpanzee)).